A 472-amino-acid chain; its full sequence is 2-oxoisovalerate dehydrogenase subunit alpha 1, mitochondrial (472 aa).

The transit peptide at 1-56 (MAIWFARSKTLVSSLRHNLNLSTILIKRDYSHRPIFYTTSQLSSTAYLSPFGSLRH) directs the protein to the mitochondrion. 185–187 (QYR) contributes to the thiamine diphosphate binding site. K(+)-binding residues include serine 234, threonine 239, and glutamine 240.

This sequence belongs to the BCKDHA family. As to quaternary structure, heterotetramer of alpha and beta chains. Requires thiamine diphosphate as cofactor.

It is found in the mitochondrion matrix. The enzyme catalyses N(6)-[(R)-lipoyl]-L-lysyl-[protein] + 3-methyl-2-oxobutanoate + H(+) = N(6)-[(R)-S(8)-2-methylpropanoyldihydrolipoyl]-L-lysyl-[protein] + CO2. The branched-chain alpha-keto dehydrogenase complex catalyzes the overall conversion of alpha-keto acids to acyl-CoA and CO(2). It contains multiple copies of three enzymatic components: branched-chain alpha-keto acid decarboxylase (E1), lipoamide acyltransferase (E2) and lipoamide dehydrogenase (E3). Required during sugar starvation. The polypeptide is 2-oxoisovalerate dehydrogenase subunit alpha 1, mitochondrial (Arabidopsis thaliana (Mouse-ear cress)).